Here is a 1425-residue protein sequence, read N- to C-terminus: MANSRQYYPSQDESMSPTSVRSREWEGPSRWTEYLGPEMAASVSSTRSSKQIDGHVGGSTKALNIQWVVQMIEVADGLMAKMYRLNQILEYPDPVGHVFSEAFWKAGVFPNHPRICTLLSKKFPEHFSKLQLERIDKFSLDSLHDGAELHLQSLEPWIQLLLDLMAFREQALRLILDLSSTVITLLPHQNSLILHAFMDLFCAFVRVNLFAEKIPRKMLLQVYNLLHALSRNDRDCDFYHRLVQFIDSYDPPLKGLQEDLNFVSPRIGEVLEAVGPSIFLSADTRKLRNEGFLSPYHPRFPDILTNSAHPMRAQDLANVTSYREWVLLGYLVCPDELLRVTSIDIALVVLKENLVVTLFRDEVSLYQMVCEKEFGIGISFASADSINLTMQYILLHEDYQLYVLPRVLESKKMAKSGRTKQKEADLEYSVAKQVEKMISEVHEQALQLCDTIHRERRILLKQEIGRMVLFFTDQPSLLAPNIQMVFSALALAQSEVLWYFQHAGIASSRSKAARVIPVDIDPNDPTIGFLLDGMDRLCCLVRKYISAARGYALSYLSSSAGRIRYLMGTPGIVALDLDPTLKGLFQRIVQHLESIPKAQGENVSAITCDLSDFRKDWLSILMIVTSSRSSINIRHLEKATVSTGKEGLLSEGNAAYNWSRCVDELESQLSKHGSLKKLYFYHQHLTTVFRNTMFGPEGRPQHCCAWLSVASSFPECASLIIPEEVTKFGRDAVLYVESLIESIMGGLEGLINILDSEGGFGALESQLLPEQAAAYLNNASRISAPSVKSPRVVGGFTLPGHESYPENNKSIKMLEAAIQRLTNLCSILNDMEPICVINHVFVLREYMRECILGNFKRRFLTALQTDNDLQRPSVLESLIRRHMGIVHLAEQHVSMDLTQGIREILLTEAFSGPVSSLHTFEKPAEQQQTTGSAVEVVCNWYMDNIIKDVSGAGILFAPRHKYFKSTRPVGGYFAESVTDLKELQAFVRIFGGYGVDRLDRMMKVHTAALVNCIETSLRSNRELIEAAAASMHSGDRVERDASVRQIVDLDTVIGFCIEAGQALAFDDLLAEASGAVLEDNASLIHSMISGIVEHIPEEIPEKKEIRRIKGVANGVGVAGDHDSEWVRLILEEVGGANDNSWSLLPYFFASFMTSNAWNTTGFNIETGGFSNNIHCLARCISAVIAGSEYVRLQREYQQQHQSLSNGHHSSENLDSEFPPRVTAEASIKSSMLLFVKFAASIVLDSWSEANRSHLVAKLIFLDQLCEISPYLPRSSLESHVPYTILRSIYTQYYSNTPSTPLSTASPYHSPSVSLIHASPSMKNSTTPQRGSGSGSSSTAAPDSGYFKGSSSSLYGQEHYTESETGNSRNNENNNNNKQRGSSRRSGPLDYSSSHKGGSGSNSTGPSPLPRFAVSRSGPISYKQHN.

Composition is skewed to polar residues over residues 1–20 (MANSRQYYPSQDESMSPTSV), 1299–1312 (TPLSTASPYHSPSV), and 1320–1329 (SMKNSTTPQR). Disordered stretches follow at residues 1 to 24 (MANSRQYYPSQDESMSPTSVRSRE) and 1299 to 1425 (TPLS…KQHN). Residues 1362–1405 (SETGNSRNNENNNNNKQRGSSRRSGPLDYSSSHKGGSGSNSTGP) show a composition bias toward low complexity.

This sequence belongs to the HEM-1/HEM-2 family. In terms of assembly, binds PIR. In terms of tissue distribution, expressed in roots, root hairs, hypocotyls, cotyledons, stems, leaves, trichomes, and flowers.

In terms of biological role, involved in regulation of actin and microtubule organization. Part of a WAVE complex that activates the Arp2/3 complex. This is Protein NAP1 (NAP1) from Arabidopsis thaliana (Mouse-ear cress).